The primary structure comprises 395 residues: WW domain-containing transcription regulator protein 1 (395 aa).

Residue K46 forms a Glycyl lysine isopeptide (Lys-Gly) (interchain with G-Cter in ubiquitin) linkage. The interval 52–116 (FFKEPDSGSH…AQQHAHLRQQ (65 aa)) is disordered. Polar residues predominate over residues 61-70 (HSRQSSTDSS). S62 is subject to Phosphoserine. S89 carries the phosphoserine; by LATS2 modification. The WW domain occupies 124 to 157 (LPLPPGWEMTFTATGQRYFLNHIEKITTWQDPRK). The interval 221 to 395 (PNALTTQQQQ…NKSEPFLTWL (175 aa)) is required for interaction with PALS1. Residues 224–258 (LTTQQQQQQKLRLQRIQMERERIRMRQEELMRQEA) adopt a coiled-coil conformation. Positions 277–293 (PAMSTDMRSVTNSSSDP) are enriched in polar residues. The segment at 277-308 (PAMSTDMRSVTNSSSDPFLNGGPYHSREQSTD) is disordered. At S290 the chain carries Phosphoserine. Phosphoserine; by LATS2 is present on S306. The short motif at 389-395 (EPFLTWL) is the PDZ-binding element.

As to quaternary structure, binds to SLC9A3R2 via the PDZ motif at the plasma membrane. Binds to YWHAZ in vivo and in vitro through the phosphoserine-binding motif RSHSSP. Interacts (via coiled-coil domain) with SMAD2 (via MH1 domain), SMAD3 and SMAD4. Interacts with MED15. Interacts with PAX8 and NKX2-1. Interacts with TEAD1, TEAD2, TEAD3 and TEAD4. Interacts (via WW domain) with PALS1. Interacts with LATS1. Interacts with YAP1 (when phosphorylated at 'Ser-112'). Interacts (via WW domain) with PRRG4 (via cytoplasmic domain). Interacts (via WW domain) with AMOTL2 (via PPXY motif); the interaction promotes WWTR1/TAZ localization to the cytoplasm and tight junctions, thereby inhibiting its transcriptional coactivator properties. Interacts (via WW domain) with AMOT; the interaction facilitates translocation of WWTR1/TAZ to the cytoplasm. In terms of processing, phosphorylated by LATS2 and STK3/MST2. Phosphorylation by LATS2 results in creation of 14-3-3 binding sites, retention in the cytoplasm, and functional inactivation. Phosphorylation results in the inhibition of transcriptional coactivation through YWHAZ-mediated nuclear export. Post-translationally, ubiquitinated at Lys-46; leading to proteasomal degradation. Deubiquitinated and stabilized by UCHL1 at Lys-46; leading to inhibition of osteoclastogenesis. In terms of tissue distribution, highly expressed in kidney, heart, placenta and lung.

The protein resides in the nucleus. It localises to the cytoplasm. Its subcellular location is the cell membrane. The protein localises to the cell junction. It is found in the tight junction. In terms of biological role, transcriptional coactivator which acts as a downstream regulatory target in the Hippo signaling pathway that plays a pivotal role in organ size control and tumor suppression by restricting proliferation and promoting apoptosis. The core of this pathway is composed of a kinase cascade wherein STK3/MST2 and STK4/MST1, in complex with its regulatory protein SAV1, phosphorylates and activates LATS1/2 in complex with its regulatory protein MOB1, which in turn phosphorylates and inactivates YAP1 oncoprotein and WWTR1/TAZ. WWTR1 enhances PAX8 and NKX2-1/TTF1-dependent gene activation. In conjunction with YAP1, involved in the regulation of TGFB1-dependent SMAD2 and SMAD3 nuclear accumulation. Plays a key role in coupling SMADs to the transcriptional machinery such as the mediator complex. Regulates embryonic stem-cell self-renewal, promotes cell proliferation and epithelial-mesenchymal transition. The sequence is that of WW domain-containing transcription regulator protein 1 from Mus musculus (Mouse).